The primary structure comprises 212 residues: Cytidylate kinase (212 aa).

7 to 15 (GPAASGKGT) serves as a coordination point for ATP.

It belongs to the cytidylate kinase family. Type 1 subfamily.

The protein localises to the cytoplasm. The enzyme catalyses CMP + ATP = CDP + ADP. It carries out the reaction dCMP + ATP = dCDP + ADP. In Rhodopseudomonas palustris (strain ATCC BAA-98 / CGA009), this protein is Cytidylate kinase.